A 200-amino-acid chain; its full sequence is Charged multivesicular body protein 6 (200 aa).

Gly-2 is lipidated: N-myristoyl glycine. Positions 10–94 form a coiled coil; the sequence is RSRVTEQDKA…ERMVQDIEFT (85 aa). Positions 168-179 match the Type-2 MIT-interacting motif motif; that stretch reads LELPDVPSEPLP. Positions 169-200 are disordered; it reads ELPDVPSEPLPEEPPEATPVKNRPKPELVAAS.

Belongs to the SNF7 family. In terms of assembly, probable core component of the endosomal sorting required for transport complex III (ESCRT-III). ESCRT-III components are thought to multimerize to form a flat lattice on the perimeter membrane of the endosome.

Its subcellular location is the endomembrane system. It is found in the late endosome membrane. Probable core component of the endosomal sorting required for transport complex III (ESCRT-III) which is involved in multivesicular bodies (MVBs) formation and sorting of endosomal cargo proteins into MVBs. MVBs contain intraluminal vesicles (ILVs) that are generated by invagination and scission from the limiting membrane of the endosome and mostly are delivered to lysosomes enabling degradation of membrane proteins, such as stimulated growth factor receptors, lysosomal enzymes and lipids. In the ESCRT-III complex, it probably serves as an acceptor for the ESCRT-II complex on endosomal membranes. The polypeptide is Charged multivesicular body protein 6 (CHMP6) (Gallus gallus (Chicken)).